We begin with the raw amino-acid sequence, 189 residues long: Dihydrofolate reductase (189 aa).

Positions 3–184 (SLNSIVAVCQ…IQYKFEVYQK (182 aa)) constitute a DHFR domain. Residues Ala9 and 15-21 (GIGKDGN) contribute to the NADP(+) site. 30-35 (EYKYFQ) is a substrate binding site. 54–56 (KKT) contributes to the NADP(+) binding site. Substrate contacts are provided by Asn64 and Arg70. NADP(+)-binding positions include 76–78 (SRE) and 116–123 (GGTAVYKA).

This sequence belongs to the dihydrofolate reductase family.

It catalyses the reaction (6S)-5,6,7,8-tetrahydrofolate + NADP(+) = 7,8-dihydrofolate + NADPH + H(+). Its pathway is cofactor biosynthesis; tetrahydrofolate biosynthesis; 5,6,7,8-tetrahydrofolate from 7,8-dihydrofolate: step 1/1. Its function is as follows. Key enzyme in folate metabolism. Contributes to the de novo mitochondrial thymidylate biosynthesis pathway. Catalyzes an essential reaction for de novo glycine and purine synthesis, and for DNA precursor synthesis. May bind to mRNA. This chain is Dihydrofolate reductase (DHFR), found in Gallus gallus (Chicken).